Here is a 497-residue protein sequence, read N- to C-terminus: Probable small intestine urate exporter (497 aa).

Residues Asn-47, Asn-56, Asn-66, Asn-75, and Asn-90 are each glycosylated (N-linked (GlcNAc...) asparagine). 10 helical membrane passes run 149-169 (SFLT…LIVL), 171-191 (IVQG…WVKW), 203-223 (IAGS…GLLC), 230-250 (YVFY…FPLI), 292-312 (LPLW…YTIM), 332-352 (ILSA…GLLA), 368-388 (KLFT…LPWV), 398-418 (FLVL…VNFL), 431-451 (LLQV…GFFI), and 461-481 (NVFL…LIFG).

Belongs to the major facilitator superfamily. Sodium/anion cotransporter family. Abundantly expressed in pancreas, liver, colon and small intestine, less in kidney. Not detected in the adrenal glands, brain, placenta, heart, testis, skeletal muscle, and lungs.

The protein resides in the apical cell membrane. It catalyses the reaction 3 Na(+)(out) + phosphate(out) = 3 Na(+)(in) + phosphate(in). It carries out the reaction urate(out) + n chloride(in) = urate(in) + n chloride(out). The enzyme catalyses L-thyroxine(out) = L-thyroxine(in). The catalysed reaction is 3,3',5-triiodo-L-thyronine(out) = 3,3',5-triiodo-L-thyronine(in). Functionally, acts as a membrane potential-dependent organic anion transporter, the transport requires a low concentration of chloride ions. Mediates chloride-dependent transport of urate. Mediates sodium-independent high affinity transport of thyroid hormones including L-thyroxine (T4) and 3,3',5-triiodo-L-thyronine (T3). Can actively transport inorganic phosphate into cells via Na(+) cotransport. This is Probable small intestine urate exporter (SLC17A4) from Homo sapiens (Human).